A 455-amino-acid chain; its full sequence is UDP-N-acetylmuramoylalanine--D-glutamate ligase (455 aa).

119-125 (GTNGKTT) is an ATP binding site.

It belongs to the MurCDEF family.

It is found in the cytoplasm. It catalyses the reaction UDP-N-acetyl-alpha-D-muramoyl-L-alanine + D-glutamate + ATP = UDP-N-acetyl-alpha-D-muramoyl-L-alanyl-D-glutamate + ADP + phosphate + H(+). It functions in the pathway cell wall biogenesis; peptidoglycan biosynthesis. Functionally, cell wall formation. Catalyzes the addition of glutamate to the nucleotide precursor UDP-N-acetylmuramoyl-L-alanine (UMA). This Listeria monocytogenes serotype 4b (strain F2365) protein is UDP-N-acetylmuramoylalanine--D-glutamate ligase.